We begin with the raw amino-acid sequence, 451 residues long: Phosphoglucosamine mutase (451 aa).

Residue Ser103 is the Phosphoserine intermediate of the active site. The Mg(2+) site is built by Ser103, Asp243, Asp245, and Asp247. Ser103 carries the post-translational modification Phosphoserine.

This sequence belongs to the phosphohexose mutase family. It depends on Mg(2+) as a cofactor. Post-translationally, activated by phosphorylation.

The enzyme catalyses alpha-D-glucosamine 1-phosphate = D-glucosamine 6-phosphate. Its function is as follows. Catalyzes the conversion of glucosamine-6-phosphate to glucosamine-1-phosphate. In Limosilactobacillus reuteri subsp. reuteri (strain JCM 1112) (Lactobacillus reuteri), this protein is Phosphoglucosamine mutase.